The chain runs to 393 residues: S-adenosylmethionine synthase 3 (393 aa).

Glutamate 43 serves as a coordination point for K(+). Glutamate 56 and glutamine 99 together coordinate L-methionine. Residues 167-169 (DGK), 235-238 (SGRF), aspartate 246, 252-253 (RK), alanine 269, lysine 273, and lysine 277 contribute to the ATP site. Aspartate 246 lines the L-methionine pocket. Residue lysine 277 coordinates L-methionine.

Belongs to the AdoMet synthase family. In terms of assembly, homotetramer. Mn(2+) serves as cofactor. It depends on Mg(2+) as a cofactor. Co(2+) is required as a cofactor. Requires K(+) as cofactor.

The protein resides in the cytoplasm. It carries out the reaction L-methionine + ATP + H2O = S-adenosyl-L-methionine + phosphate + diphosphate. Its pathway is amino-acid biosynthesis; S-adenosyl-L-methionine biosynthesis; S-adenosyl-L-methionine from L-methionine: step 1/1. Functionally, catalyzes the formation of S-adenosylmethionine from methionine and ATP. The reaction comprises two steps that are both catalyzed by the same enzyme: formation of S-adenosylmethionine (AdoMet) and triphosphate, and subsequent hydrolysis of the triphosphate. The chain is S-adenosylmethionine synthase 3 (SAM3) from Actinidia chinensis var. chinensis (Chinese soft-hair kiwi).